The following is a 908-amino-acid chain: 26S proteasome non-ATPase regulatory subunit 2 (908 aa).

Met1 carries the N-acetylmethionine modification. The interval 1 to 52 (MEEGGRDKAPLQPQQPPATSPGSGDEKPSGKERRDAGDKDKEQELSEEDKQL) is disordered. A compositionally biased stretch (basic and acidic residues) spans 24–52 (GDEKPSGKERRDAGDKDKEQELSEEDKQL). Ser29 and Ser147 each carry phosphoserine. Tyr194 bears the Phosphotyrosine mark. Residues Ser361 and Ser363 each carry the phosphoserine modification. 5 PC repeats span residues 409 to 442 (SAAASLGMILLWDVDGGLTQIDKYLYSSEDYIKS), 443 to 479 (GALLACGIVNSGVRNECDPALALLSDYVLHNSNTMRL), 480 to 514 (GSIFGLGLAYAGSNREDVLTLLLPVMGDSKSSMEV), 517 to 551 (VTALACGMIAVGSCNGDVTSTILQTIMEKSETELK), and 560 to 589 (LGLGLNHLGKGEAIEAILAALEVVSEPFRS). An N6-acetyllysine modification is found at Lys551. Positions 623–643 (KEKEEDKDKKEKKDKDKKEAP) are enriched in basic and acidic residues. Residues 623 to 645 (KEKEEDKDKKEKKDKDKKEAPAD) are disordered. PC repeat units lie at residues 692-723 (LALALISVSNPRLNILDTLSKFSHDADPEVSY) and 742-757 (AAMLRQLAQYHAKDPN). Positions 708 to 903 (DTLSKFSHDA…LEGFVILRKN (196 aa)) are required for interaction with UBLCP1.

This sequence belongs to the proteasome subunit S2 family. As to quaternary structure, component of the 19S proteasome regulatory particle complex. The 26S proteasome consists of a 20S core particle (CP) and two 19S regulatory subunits (RP). The regulatory particle is made of a lid composed of 9 subunits, a base containing 6 ATPases and few additional components including PSMD2. Interacts with RPGRIP1L. Interacts with CRY1 in a KDM8-dependent manner. Interacts (via C-terminus) with phosphatase UBLCP1 (via ubiquitin-like domain); the interaction recruits UBLCP1 to the 19S regulatory particle where it dephosphorylates 19S subunit PSMC2/RPT1 which impairs PSMC2 ATPase activity and disrupts 26S proteasome assembly.

Component of the 26S proteasome, a multiprotein complex involved in the ATP-dependent degradation of ubiquitinated proteins. This complex plays a key role in the maintenance of protein homeostasis by removing misfolded or damaged proteins, which could impair cellular functions, and by removing proteins whose functions are no longer required. Therefore, the proteasome participates in numerous cellular processes, including cell cycle progression, apoptosis, or DNA damage repair. Functionally, binds to the intracellular domain of tumor necrosis factor type 1 receptor. The binding domain of TRAP1 and TRAP2 resides outside the death domain of TNFR1. This Bos taurus (Bovine) protein is 26S proteasome non-ATPase regulatory subunit 2 (PSMD2).